The chain runs to 1235 residues: UPF0507 protein DEHA2G04334g (1235 aa).

The region spanning 323–487 (QNDDSDAIKI…LSSSMNDEPQ (165 aa)) is the VPS9 domain. Positions 1097 to 1124 (STTEADTTDTTDATDATHASPNLANSTN) are disordered. Over residues 1100–1115 (EADTTDTTDATDATHA) the composition is skewed to low complexity.

It belongs to the UPF0507 family.

The polypeptide is UPF0507 protein DEHA2G04334g (Debaryomyces hansenii (strain ATCC 36239 / CBS 767 / BCRC 21394 / JCM 1990 / NBRC 0083 / IGC 2968) (Yeast)).